We begin with the raw amino-acid sequence, 227 residues long: Fibrillarin-like rRNA/tRNA 2'-O-methyltransferase (227 aa).

S-adenosyl-L-methionine-binding positions include 86–87 (TT), 105–106 (EF), 130–131 (DA), and 150–153 (DVAQ).

This sequence belongs to the methyltransferase superfamily. Fibrillarin family. Interacts with nop5. Component of box C/D small ribonucleoprotein (sRNP) particles that contain rpl7ae, FlpA and nop5, plus a guide RNA.

Its function is as follows. Involved in pre-rRNA and tRNA processing. Utilizes the methyl donor S-adenosyl-L-methionine to catalyze the site-specific 2'-hydroxyl methylation of ribose moieties in rRNA and tRNA. Site specificity is provided by a guide RNA that base pairs with the substrate. Methylation occurs at a characteristic distance from the sequence involved in base pairing with the guide RNA. In Pyrococcus horikoshii (strain ATCC 700860 / DSM 12428 / JCM 9974 / NBRC 100139 / OT-3), this protein is Fibrillarin-like rRNA/tRNA 2'-O-methyltransferase.